We begin with the raw amino-acid sequence, 108 residues long: Parvalbumin alpha (108 aa).

A1 carries the N-acetylalanine modification. EF-hand domains lie at 37-72 (MSAN…FAAD) and 76-108 (LTDA…VHEA). Residues D50, D52, S54, F56, E58, E61, D89, D91, D93, K95, and E100 each contribute to the Ca(2+) site.

It belongs to the parvalbumin family.

In muscle, parvalbumin is thought to be involved in relaxation after contraction. It binds two calcium ions. This chain is Parvalbumin alpha, found in Esox lucius (Northern pike).